A 71-amino-acid polypeptide reads, in one-letter code: Small ribosomal subunit protein bS21 (71 aa).

It belongs to the bacterial ribosomal protein bS21 family.

The protein is Small ribosomal subunit protein bS21 of Alcanivorax borkumensis (strain ATCC 700651 / DSM 11573 / NCIMB 13689 / SK2).